The chain runs to 1105 residues: Carbamoyl phosphate synthase large chain (1105 aa).

Positions 1 to 402 (MPKRDDIEKV…ALGKAVRSLE (402 aa)) are carboxyphosphate synthetic domain. Residues Arg129, Arg169, Gly175, Gly176, Lys208, Val210, Glu215, Gly241, Ile242, His243, Gln285, and Glu299 each coordinate ATP. Positions 133–328 (KTAMKNCGLE…IAKISALLAV (196 aa)) constitute an ATP-grasp 1 domain. Mg(2+)-binding residues include Gln285, Glu299, and Asn301. 3 residues coordinate Mn(2+): Gln285, Glu299, and Asn301. Residues 403 to 542 (LDIAPKLDLR…STYNGMENET (140 aa)) are oligomerization domain. Positions 543 to 945 (IPSKRRKIMV…AFAKAQLSAD (403 aa)) are carbamoyl phosphate synthetic domain. Residues 667–858 (AKFLKQSGLS…VAKIAAKTII (192 aa)) enclose the ATP-grasp 2 domain. 10 residues coordinate ATP: Arg703, Lys742, Leu744, Glu749, Gly774, Ile775, His776, Ser777, Gln817, and Glu829. Residues Gln817, Glu829, and Asn831 each contribute to the Mg(2+) site. Mn(2+)-binding residues include Gln817, Glu829, and Asn831. The MGS-like domain occupies 940–1101 (AQLSADGIST…QDIFYAQQNT (162 aa)). The interval 946–1105 (GISTKSLLVT…YAQQNTLLKK (160 aa)) is allosteric domain.

The protein belongs to the CarB family. As to quaternary structure, composed of two chains; the small (or glutamine) chain promotes the hydrolysis of glutamine to ammonia, which is used by the large (or ammonia) chain to synthesize carbamoyl phosphate. Tetramer of heterodimers (alpha,beta)4. Mg(2+) serves as cofactor. Requires Mn(2+) as cofactor.

It catalyses the reaction hydrogencarbonate + L-glutamine + 2 ATP + H2O = carbamoyl phosphate + L-glutamate + 2 ADP + phosphate + 2 H(+). It carries out the reaction hydrogencarbonate + NH4(+) + 2 ATP = carbamoyl phosphate + 2 ADP + phosphate + 2 H(+). It participates in amino-acid biosynthesis; L-arginine biosynthesis; carbamoyl phosphate from bicarbonate: step 1/1. It functions in the pathway pyrimidine metabolism; UMP biosynthesis via de novo pathway; (S)-dihydroorotate from bicarbonate: step 1/3. Large subunit of the glutamine-dependent carbamoyl phosphate synthetase (CPSase). CPSase catalyzes the formation of carbamoyl phosphate from the ammonia moiety of glutamine, carbonate, and phosphate donated by ATP, constituting the first step of 2 biosynthetic pathways, one leading to arginine and/or urea and the other to pyrimidine nucleotides. The large subunit (synthetase) binds the substrates ammonia (free or transferred from glutamine from the small subunit), hydrogencarbonate and ATP and carries out an ATP-coupled ligase reaction, activating hydrogencarbonate by forming carboxy phosphate which reacts with ammonia to form carbamoyl phosphate. The polypeptide is Carbamoyl phosphate synthase large chain (Pseudothermotoga lettingae (strain ATCC BAA-301 / DSM 14385 / NBRC 107922 / TMO) (Thermotoga lettingae)).